The chain runs to 423 residues: Glutamate--cysteine ligase EgtA (423 aa).

It belongs to the glutamate--cysteine ligase type 2 family. EgtA subfamily.

It carries out the reaction L-cysteine + L-glutamate + ATP = gamma-L-glutamyl-L-cysteine + ADP + phosphate + H(+). Its pathway is amino-acid biosynthesis; ergothioneine biosynthesis. In terms of biological role, catalyzes the synthesis of gamma-glutamylcysteine (gamma-GC). This compound is used as substrate for the biosynthesis of the low-molecular thiol compound ergothioneine. This is Glutamate--cysteine ligase EgtA from Mycolicibacterium smegmatis (strain ATCC 700084 / mc(2)155) (Mycobacterium smegmatis).